The following is a 201-amino-acid chain: Proteasome subunit beta type-2 (201 aa).

M1 carries the N-acetylmethionine modification.

The protein belongs to the peptidase T1B family. As to quaternary structure, the 26S proteasome consists of a 20S proteasome core and two 19S regulatory subunits. The 20S proteasome core is a barrel-shaped complex made of 28 subunits that are arranged in four stacked rings. The two outer rings are each formed by seven alpha subunits, and the two inner rings are formed by seven beta subunits. The proteolytic activity is exerted by three beta-subunits PSMB5, PSMB6 and PSMB7. In terms of tissue distribution, detected in liver (at protein level).

The protein localises to the cytoplasm. It is found in the nucleus. In terms of biological role, non-catalytic component of the 20S core proteasome complex involved in the proteolytic degradation of most intracellular proteins. This complex plays numerous essential roles within the cell by associating with different regulatory particles. Associated with two 19S regulatory particles, forms the 26S proteasome and thus participates in the ATP-dependent degradation of ubiquitinated proteins. The 26S proteasome plays a key role in the maintenance of protein homeostasis by removing misfolded or damaged proteins that could impair cellular functions, and by removing proteins whose functions are no longer required. Associated with the PA200 or PA28, the 20S proteasome mediates ubiquitin-independent protein degradation. This type of proteolysis is required in several pathways including spermatogenesis (20S-PA200 complex) or generation of a subset of MHC class I-presented antigenic peptides (20S-PA28 complex). The protein is Proteasome subunit beta type-2 (Psmb2) of Mus musculus (Mouse).